We begin with the raw amino-acid sequence, 416 residues long: Queuine tRNA-ribosyltransferase accessory subunit 2 (416 aa).

Zn(2+) contacts are provided by Cys350, Cys352, Cys355, and His381.

It belongs to the queuine tRNA-ribosyltransferase family. QTRT2 subfamily. Heterodimer of a catalytic subunit qtrt1 and an accessory subunit qtrt2. Zn(2+) serves as cofactor.

It is found in the cytoplasm. Its subcellular location is the mitochondrion outer membrane. In terms of biological role, non-catalytic subunit of the queuine tRNA-ribosyltransferase (TGT) that catalyzes the base-exchange of a guanine (G) residue with queuine (Q) at position 34 (anticodon wobble position) in tRNAs with GU(N) anticodons (tRNA-Asp, -Asn, -His and -Tyr), resulting in the hypermodified nucleoside queuosine (7-(((4,5-cis-dihydroxy-2-cyclopenten-1-yl)amino)methyl)-7-deazaguanosine). This chain is Queuine tRNA-ribosyltransferase accessory subunit 2, found in Danio rerio (Zebrafish).